The following is a 272-amino-acid chain: Nuclear transcription factor Y subunit A-1 (272 aa).

Disordered stretches follow at residues 1-20 (MQSK…HAVQ) and 34-106 (SFGV…PALS). Composition is skewed to polar residues over residues 46 to 61 (IPSN…GSES) and 82 to 92 (KDSQAATSSRS). The short motif at 175–198 (YVNAKQYEGILRRRKARAKAELER) is the Subunit association domain (SAD) element. The NFYA/HAP2-type DNA-binding region spans 205–230 (KPYLHESRHKHAMRRARASGGRFAKK). Positions 206–272 (PYLHESRHKH…NETLNSSGAP (67 aa)) are disordered. Basic residues predominate over residues 211–221 (SRHKHAMRRAR). Positions 229–247 (KKSEVEAGEDAGGRDRERG) are enriched in basic and acidic residues. 2 stretches are compositionally biased toward polar residues: residues 248 to 257 (SATNSSGSEQ) and 263 to 272 (NETLNSSGAP).

Belongs to the NFYA/HAP2 subunit family. As to quaternary structure, heterotrimeric transcription factor composed of three components, NF-YA, NF-YB and NF-YC. NF-YB and NF-YC must interact and dimerize for NF-YA association and DNA binding. Ubiquitous.

It localises to the nucleus. Stimulates the transcription of various genes by recognizing and binding to a CCAAT motif in promoters. The sequence is that of Nuclear transcription factor Y subunit A-1 (NFYA1) from Arabidopsis thaliana (Mouse-ear cress).